The chain runs to 172 residues: Ribosome maturation factor RimM (172 aa).

Residues 97 to 170 enclose the PRC barrel domain; the sequence is ENEFYFHEII…KITIEVMEGL (74 aa).

The protein belongs to the RimM family. Binds ribosomal protein uS19.

It localises to the cytoplasm. Functionally, an accessory protein needed during the final step in the assembly of 30S ribosomal subunit, possibly for assembly of the head region. Essential for efficient processing of 16S rRNA. May be needed both before and after RbfA during the maturation of 16S rRNA. It has affinity for free ribosomal 30S subunits but not for 70S ribosomes. This is Ribosome maturation factor RimM from Listeria innocua serovar 6a (strain ATCC BAA-680 / CLIP 11262).